The chain runs to 422 residues: Proline--tRNA ligase (422 aa).

It belongs to the class-II aminoacyl-tRNA synthetase family. ProS type 2 subfamily. In terms of assembly, homodimer.

Its subcellular location is the cytoplasm. The enzyme catalyses tRNA(Pro) + L-proline + ATP = L-prolyl-tRNA(Pro) + AMP + diphosphate. Its function is as follows. Catalyzes the attachment of proline to tRNA(Pro) in a two-step reaction: proline is first activated by ATP to form Pro-AMP and then transferred to the acceptor end of tRNA(Pro). This Wolbachia pipientis wMel protein is Proline--tRNA ligase.